The sequence spans 137 residues: Large ribosomal subunit protein uL16 (137 aa).

The protein belongs to the universal ribosomal protein uL16 family. As to quaternary structure, part of the 50S ribosomal subunit.

In terms of biological role, binds 23S rRNA and is also seen to make contacts with the A and possibly P site tRNAs. This Pseudomonas fluorescens (strain Pf0-1) protein is Large ribosomal subunit protein uL16.